The following is a 259-amino-acid chain: Cell division protein DivIB (259 aa).

Residues 1 to 27 (MADGKVIDIEQKVPDFREQRRRKSRRR) lie on the Cytoplasmic side of the membrane. A helical transmembrane segment spans residues 28–45 (LVLYISILAFFLLFVYYF). Topologically, residues 46–259 (QSDYSTVGHV…QEEEEIEIEE (214 aa)) are extracellular. Residues 50-118 (STVGHVDVYG…RSITLYVDEY (69 aa)) form the POTRA domain.

This sequence belongs to the FtsQ/DivIB family. DivIB subfamily.

The protein localises to the cell membrane. Cell division protein that may be involved in stabilizing or promoting the assembly of the division complex. This chain is Cell division protein DivIB, found in Bacillus selenitireducens (strain ATCC 700615 / DSM 15326 / MLS10).